Consider the following 232-residue polypeptide: MEEKKSKVILHGTWISTYSKRVEIALKLKGVLYEYLEEDLQNKSESLIQLNPVHKKIPVLVHDGKPVAESLVILEYIDETWTNSPRFFPEDPYERAQVRFWVSYINQQVFEVMGQVMSQEGEAQAKSVEEARKRFKVLDEGLKKHFPNKNIRRNDDVGLLEITIIATLGGYKAHREAIGVDIIGPVNTPTLYNWIERLQDLSVIKEVEVPHDTLVTFIQKYRQKCLQQAANA.

Residues 6 to 85 form the GST N-terminal domain; the sequence is SKVILHGTWI…YIDETWTNSP (80 aa). Glutathione is bound by residues 16 to 17, 42 to 43, 56 to 57, and 69 to 70; these read ST, NK, KI, and ES. The region spanning 91–226 is the GST C-terminal domain; it reads DPYERAQVRF…FIQKYRQKCL (136 aa).

Belongs to the GST superfamily. Tau family.

Its subcellular location is the cytoplasm. The protein localises to the cytosol. The catalysed reaction is RX + glutathione = an S-substituted glutathione + a halide anion + H(+). In terms of biological role, may be involved in the conjugation of reduced glutathione to a wide number of exogenous and endogenous hydrophobic electrophiles and have a detoxification role against certain herbicides. The sequence is that of Glutathione S-transferase U10 (GSTU10) from Arabidopsis thaliana (Mouse-ear cress).